The primary structure comprises 289 residues: Phosphatidylserine decarboxylase proenzyme (289 aa).

Catalysis depends on charge relay system; for autoendoproteolytic cleavage activity residues D88, H145, and S251. Residue S251 is the Schiff-base intermediate with substrate; via pyruvic acid; for decarboxylase activity of the active site. Residue S251 is modified to Pyruvic acid (Ser); by autocatalysis.

The protein belongs to the phosphatidylserine decarboxylase family. PSD-B subfamily. Prokaryotic type I sub-subfamily. In terms of assembly, heterodimer of a large membrane-associated beta subunit and a small pyruvoyl-containing alpha subunit. The cofactor is pyruvate. In terms of processing, is synthesized initially as an inactive proenzyme. Formation of the active enzyme involves a self-maturation process in which the active site pyruvoyl group is generated from an internal serine residue via an autocatalytic post-translational modification. Two non-identical subunits are generated from the proenzyme in this reaction, and the pyruvate is formed at the N-terminus of the alpha chain, which is derived from the carboxyl end of the proenzyme. The autoendoproteolytic cleavage occurs by a canonical serine protease mechanism, in which the side chain hydroxyl group of the serine supplies its oxygen atom to form the C-terminus of the beta chain, while the remainder of the serine residue undergoes an oxidative deamination to produce ammonia and the pyruvoyl prosthetic group on the alpha chain. During this reaction, the Ser that is part of the protease active site of the proenzyme becomes the pyruvoyl prosthetic group, which constitutes an essential element of the active site of the mature decarboxylase.

Its subcellular location is the cell membrane. It carries out the reaction a 1,2-diacyl-sn-glycero-3-phospho-L-serine + H(+) = a 1,2-diacyl-sn-glycero-3-phosphoethanolamine + CO2. It participates in phospholipid metabolism; phosphatidylethanolamine biosynthesis; phosphatidylethanolamine from CDP-diacylglycerol: step 2/2. In terms of biological role, catalyzes the formation of phosphatidylethanolamine (PtdEtn) from phosphatidylserine (PtdSer). The protein is Phosphatidylserine decarboxylase proenzyme of Polaromonas naphthalenivorans (strain CJ2).